The chain runs to 952 residues: Calsyntenin-1 (952 aa).

Positions 1–28 are cleaved as a signal peptide; sequence MLRRPAPALARAVRLLLAGLLYGGGVWA. Topologically, residues 29-830 are extracellular; sequence ARVNKHKPWL…PHPFAVVPST (802 aa). Cadherin domains follow at residues 38 to 154 and 155 to 255; these read LEPT…APVF and KEKS…SPGW. N-linked (GlcNAc...) asparagine glycosylation occurs at Asn356. Residues 831–851 form a helical membrane-spanning segment; it reads ATVVIVVCVSFLVFMIILGVF. The Cytoplasmic portion of the chain corresponds to 852–952; that stretch reads RIRAAHQRTM…LEWDYSTLSY (101 aa). The segment at 886–952 is disordered; sequence METYEDQHSS…LEWDYSTLSY (67 aa). Residues 896–930 show a composition bias toward acidic residues; it reads EEEEEEEEEEESEDGEEEEDITSAESESSEEEEGG. The span at 934-952 shows a compositional bias: polar residues; the sequence is GQNTTRQQQLEWDYSTLSY.

This sequence belongs to the calsyntenin family. In terms of assembly, directly interacts with APBA2. Forms a tripartite complex with APBA2 and APP. Interacts with KLC1. Interacts with APBB1; this interaction stabilizes AlcICD metabolism. As to quaternary structure, interacts with PSEN1. Proteolytically processed under normal cellular conditions. A primary zeta-cleavage generates a large extracellular (soluble) N-terminal domain (sAlc) and a short C-terminal transmembrane fragment (CTF1). A secondary cleavage catalyzed by presenilin gamma-secretase within the transmembrane domain releases the beta-Alc-alpha chain in the extracellular milieu and produces an intracellular fragment (AlcICD). This processing is strongly suppressed in the tripartite complex formed with APBA2 and APP, which seems to prevent the association with PSEN1. As to expression, preferentially expressed in the retina and brain.

It is found in the postsynaptic cell membrane. Its subcellular location is the endoplasmic reticulum membrane. The protein localises to the golgi apparatus membrane. The protein resides in the cell projection. It localises to the neuron projection. It is found in the nucleus. In terms of biological role, postsynaptic adhesion molecule that binds to presynaptic neurexins to mediate both excitatory and inhibitory synapse formation. Promotes synapse development by acting as a cell adhesion molecule at the postsynaptic membrane, which associates with neurexin-alpha at the presynaptic membrane. Also functions as a cargo in axonal anterograde transport by acting as a molecular adapter that promotes KLC1 association with vesicles. Complex formation with APBA2 and APP, stabilizes APP metabolism and enhances APBA2-mediated suppression of beta-APP40 secretion, due to the retardation of intracellular APP maturation. Its function is as follows. As intracellular fragment AlcICD, suppresses APBB1-dependent transactivation stimulated by APP C-terminal intracellular fragment (AICD), most probably by competing with AICD for APBB1-binding. In complex with APBA2 and C99, a C-terminal APP fragment, abolishes C99 interaction with PSEN1 and thus APP C99 cleavage by gamma-secretase, most probably through stabilization of the direct interaction between APBA2 and APP. The protein is Calsyntenin-1 (Clstn1) of Rattus norvegicus (Rat).